Reading from the N-terminus, the 465-residue chain is Apolipoprotein N-acyltransferase (465 aa).

The next 6 helical transmembrane spans lie at 12–32 (AVLGGLLAGLAPGVAGPLSML), 49–69 (ALWGLFGVLLSHRWLLGLHPL), 80–100 (LPVAVAIWLSCGVAAALLLLL), 122–142 (LLALVWGAAELLLEGSPLFWI), 161–181 (WLGSGGLATLQLLWGWGLWQL), and 189–209 (CAWWLISLLLAHAMGALSLSP). In terms of domain architecture, CN hydrolase spans 221–448 (WQPAIPTREK…DAVAAAELQR (228 aa)). The active-site Proton acceptor is the Glu-262. Lys-312 is an active-site residue. The active-site Nucleophile is Cys-360.

Belongs to the CN hydrolase family. Apolipoprotein N-acyltransferase subfamily.

It localises to the cell inner membrane. It carries out the reaction N-terminal S-1,2-diacyl-sn-glyceryl-L-cysteinyl-[lipoprotein] + a glycerophospholipid = N-acyl-S-1,2-diacyl-sn-glyceryl-L-cysteinyl-[lipoprotein] + a 2-acyl-sn-glycero-3-phospholipid + H(+). It participates in protein modification; lipoprotein biosynthesis (N-acyl transfer). In terms of biological role, catalyzes the phospholipid dependent N-acylation of the N-terminal cysteine of apolipoprotein, the last step in lipoprotein maturation. The chain is Apolipoprotein N-acyltransferase from Parasynechococcus marenigrum (strain WH8102).